The primary structure comprises 288 residues: Ras-like protein 1 (288 aa).

Position 11 to 18 (11 to 18) interacts with GTP; the sequence is GGGGVGKS. Positions 33 to 41 match the Effector region motif; that stretch reads YDPTIEDSY. Residues 58-62 and 117-120 each bind GTP; these read DTAGQ and NKCD. The disordered stretch occupies residues 176 to 288; sequence EKQQQQQQQQ…KSKNGCCVIV (113 aa). Composition is skewed to low complexity over residues 178-216 and 246-281; these read QQQQ…NNNN and PNQS…SKSK. C284 carries the S-palmitoyl cysteine lipid modification. C285 carries the post-translational modification Cysteine methyl ester. Residue C285 is the site of S-farnesyl cysteine attachment. A propeptide spans 286 to 288 (removed in mature form); it reads VIV.

The protein belongs to the small GTPase superfamily. Ras family.

It is found in the cell membrane. The enzyme catalyses GTP + H2O = GDP + phosphate + H(+). Alternates between an inactive form bound to GDP and an active form bound to GTP. Activated by a guanine nucleotide-exchange factor (GEF) and inactivated by a GTPase-activating protein (GAP). In terms of biological role, required for the regulation of both a MAP kinase signaling pathway and a cAMP signaling pathway. The activation of these pathways contributes to the pathogenicity of the cells through the induction of the morphological transition from the yeast to the polarized filamentous form. In Candida albicans (strain WO-1) (Yeast), this protein is Ras-like protein 1 (RAS1).